The primary structure comprises 635 residues: Threonine--tRNA ligase (635 aa).

The segment at 1–144 (MQLLLIHSDY…RSIRPEGTQR (144 aa)) is editing domain. Residues 215–514 (PHVELMRRLE…TEEGKVPMLP (300 aa)) form a catalytic region. Zn(2+) contacts are provided by C307, H359, and H483.

Belongs to the class-II aminoacyl-tRNA synthetase family. Homodimer. The cofactor is Zn(2+).

The protein localises to the cytoplasm. It carries out the reaction tRNA(Thr) + L-threonine + ATP = L-threonyl-tRNA(Thr) + AMP + diphosphate + H(+). In terms of biological role, catalyzes the attachment of threonine to tRNA(Thr) in a two-step reaction: L-threonine is first activated by ATP to form Thr-AMP and then transferred to the acceptor end of tRNA(Thr). Also edits incorrectly charged L-seryl-tRNA(Thr). This Methanosarcina barkeri (strain Fusaro / DSM 804) protein is Threonine--tRNA ligase.